The primary structure comprises 241 residues: Uridylate kinase (241 aa).

ATP contacts are provided by residues Lys-10–Gly-13, Gly-53, and Arg-57. UMP-binding positions include Asp-72 and Ala-133–Thr-140. Residues Asn-161, Tyr-167, and Asp-170 each coordinate ATP.

This sequence belongs to the UMP kinase family. As to quaternary structure, homohexamer.

The protein localises to the cytoplasm. The enzyme catalyses UMP + ATP = UDP + ADP. It functions in the pathway pyrimidine metabolism; CTP biosynthesis via de novo pathway; UDP from UMP (UMPK route): step 1/1. Its activity is regulated as follows. Inhibited by UTP. Its function is as follows. Catalyzes the reversible phosphorylation of UMP to UDP. The polypeptide is Uridylate kinase (Onion yellows phytoplasma (strain OY-M)).